The chain runs to 256 residues: Imidazole glycerol phosphate synthase subunit HisF (256 aa).

Active-site residues include aspartate 13 and aspartate 132.

The protein belongs to the HisA/HisF family. Heterodimer of HisH and HisF.

It is found in the cytoplasm. The enzyme catalyses 5-[(5-phospho-1-deoxy-D-ribulos-1-ylimino)methylamino]-1-(5-phospho-beta-D-ribosyl)imidazole-4-carboxamide + L-glutamine = D-erythro-1-(imidazol-4-yl)glycerol 3-phosphate + 5-amino-1-(5-phospho-beta-D-ribosyl)imidazole-4-carboxamide + L-glutamate + H(+). Its pathway is amino-acid biosynthesis; L-histidine biosynthesis; L-histidine from 5-phospho-alpha-D-ribose 1-diphosphate: step 5/9. Its function is as follows. IGPS catalyzes the conversion of PRFAR and glutamine to IGP, AICAR and glutamate. The HisF subunit catalyzes the cyclization activity that produces IGP and AICAR from PRFAR using the ammonia provided by the HisH subunit. The protein is Imidazole glycerol phosphate synthase subunit HisF of Leptospira interrogans serogroup Icterohaemorrhagiae serovar copenhageni (strain Fiocruz L1-130).